The primary structure comprises 536 residues: Proto-oncogene tyrosine-protein kinase Src (536 aa).

Residues 1–53 (MGSNKSKPKDASQRRRSLEPAENVHGAGGGAFPASQTPSKPASADGHRGPSAA) form a disordered region. Glycine 2 carries the N-myristoyl glycine lipid modification. Residues 7–19 (KPKDASQRRRSLE) show a composition bias toward basic and acidic residues. Serine 17 is subject to Phosphoserine. Serine 75 carries the phosphoserine; by CDK5 modification. The SH3 domain occupies 84–145 (GGVTTFVALY…PSNYVAPSDS (62 aa)). An SH2 domain is found at 151-248 (WYFGKITRRE…GLCHRLTTVC (98 aa)). Position 187 is a phosphotyrosine (tyrosine 187). Residues 270–523 (LRLEVKLGQG…YLQAFLEDYF (254 aa)) form the Protein kinase domain. ATP is bound by residues 276–284 (LGQGCFGEV) and lysine 298. Aspartate 389 (proton acceptor) is an active-site residue. Residue tyrosine 419 is modified to Phosphotyrosine; by autocatalysis. Tyrosine 419 carries the phosphotyrosine; by FAK2 modification. Tyrosine 530 is modified (phosphotyrosine; by CSK).

This sequence belongs to the protein kinase superfamily. Tyr protein kinase family. SRC subfamily. As to quaternary structure, part of a complex comprised of PTPRA, BCAR1, BCAR3 (via SH2 domain) and SRC; the formation of the complex is dependent on integrin mediated-tyrosine phosphorylation of PTPRA. Interacts with DDEF1/ASAP1; via the SH3 domain. Interacts with CCPG1. Identified in a complex containing FGFR4, NCAM1, CDH2, PLCG1, FRS2, SRC, SHC1, GAP43 and CTTN. Interacts with ERBB2, STAT1 and PNN. Interacts with DDR1, DDR2 and DAB2. Interacts with CDCP1, TGFB1I1 and TOM1L2. Interacts with the cytoplasmic domain of MUC1, phosphorylates it and increases binding of MUC1 with beta-catenin. Interacts with RALGPS1; via the SH3 domain. Interacts with CAV2 (tyrosine phosphorylated form). Interacts (via the SH3 domain and the protein kinase domain) with ARRB1; the interaction is independent of the phosphorylation state of SRC C-terminus. Interacts with ARRB1 and ARRB2. Interacts with SRCIN1. Interacts with NDFIP2 and more weakly with NDFIP1. Interacts with PIK3CA and/or PIK3C2B, PTK2/FAK1 and ESR1 (dimethylated on arginine). Interacts with FASLG. Interacts (via SH2 domain) with the 'Tyr-402' phosphorylated form of PTK2B/PYK2. Interacts (via SH2 domain) with FLT3 (tyrosine phosphorylated). Interacts with PDGFRA (tyrosine phosphorylated). Interacts with CSF1R. Interacts (via SH2 and SH3 domain) with TNK2. Interacts (via protein kinase domain) with the tyrosine phosphorylated form of RUNX3 (via runt domain). Interacts with TRAF3 (via RING-type zinc finger domain). Interacts with RIGI, MAVS and TBK1. Interacts (via SH2 domain) with RACK1; the interaction is enhanced by tyrosine phosphorylation of RACK1 and inhibits SRC activity. Interacts with EPHB1; activates the MAPK/ERK cascade to regulate cell migration. Interacts with FCAMR. Interacts (via SH2 domain) with the 'Tyr-9' phosphorylated form of PDPK1. Interacts with AMOTL2; this interaction regulates the translocation of phosphorylated SRC to peripheral cell-matrix adhesion sites. Interacts with TRAP1. Interacts with CBLC; the interaction is enhanced when SRC is phosphorylated at Tyr-419. Interacts with ARHGEF5. Interacts (via cytoplasmic domain) with CEACAM1 (via SH2 domain); this interaction is regulated by trans-homophilic cell adhesion. Interacts with MPP2. Interacts with PRR7. Interacts (via kinase domain and to a lesser extent the SH2 domain) directly with PDLIM4; this interaction results in PTPN13-mediated dephosphorylation of this protein leading to its inactivation. Interacts with P85 (PIK3R1 or PIK3R2). Interacts with HNRNPA2B1. Interacts with IL6ST/gp130. Interacts (via SH3 domain) with PELP1 in the presence of 17-beta-estradiol. Interacts with AMBRA1. (Microbial infection) Interacts with HEV ORF3 protein; via the SH3 domain. In terms of assembly, (Microbial infection) Interacts (via SH2 domain) with HCV non-structural protein 5A (via N-terminus). In terms of processing, myristoylated at Gly-2, and this is essential for targeting to membranes. Post-translationally, dephosphorylated at Tyr-530 by PTPRJ. Phosphorylated on Tyr-530 by c-Src kinase (CSK). The phosphorylated form is termed pp60c-src. Dephosphorylated by PTPRJ at Tyr-419. Normally maintained in an inactive conformation with the SH2 domain engaged with Tyr-530, the SH3 domain engaged with the SH2-kinase linker, and Tyr-419 dephosphorylated. Dephosphorylation of Tyr-530 as a result of protein tyrosine phosphatase (PTP) action disrupts the intramolecular interaction between the SH2 domain and Tyr-530, Tyr-419 can then become autophosphorylated, resulting in SRC activation. Phosphorylation of Tyr-530 by CSK allows this interaction to reform, resulting in SRC inactivation. CDK5-mediated phosphorylation at Ser-75 targets SRC to ubiquitin-dependent degradation and thus leads to cytoskeletal reorganization. Phosphorylated by PTK2/FAK1; this enhances kinase activity. Phosphorylated by PTK2B/PYK2; this enhances kinase activity. Upon activation of IL6ST by IL6, Tyr-419 is phosphorylated and Tyr-530 dephosphorylated. Displays reduced levels of autophosphorylation at Tyr-419 compared to isoforms 2 and 3. In terms of processing, displays enhanced levels of autophosphorylation at Tyr-419 compared to isoform 1. Post-translationally, displays enhanced levels of autophosphorylation at Tyr-419 compared to isoform 1. Shows reduced phosphorylation at Tyr-527 compared to isoforms 1 and 2. S-nitrosylation is important for activation of its kinase activity. In terms of processing, ubiquitinated in response to CDK5-mediated phosphorylation. Ubiquitination mediated by CBLC requires SRC autophosphorylation at Tyr-419 and may lead to lysosomal degradation. Expressed ubiquitously. Expressed in the skin (at protein level). Platelets, neurons and osteoclasts express 5-fold to 200-fold higher levels than most other tissues. As to expression, expressed in spleen and liver. In terms of tissue distribution, expressed in brain.

The protein localises to the cell membrane. The protein resides in the mitochondrion inner membrane. It localises to the nucleus. It is found in the cytoplasm. Its subcellular location is the cytoskeleton. The protein localises to the perinuclear region. The protein resides in the cell junction. It localises to the focal adhesion. The enzyme catalyses L-tyrosyl-[protein] + ATP = O-phospho-L-tyrosyl-[protein] + ADP + H(+). Phosphorylation by CSK at Tyr-530 inhibits kinase activity. Inhibitory phosphorylation at Tyr-530 is enhanced by heme. Further phosphorylation by CDK1 partially reactivates CSK-inactivated SRC and facilitates complete reactivation by protein tyrosine phosphatase PTPRC. Integrin engagement stimulates kinase activity. Phosphorylation by PTK2/FAK1 enhances kinase activity. Butein and pseudosubstrate-based peptide inhibitors like CIYKYYF act as inhibitors. Phosphorylation at Tyr-419 increases kinase activity. In terms of biological role, non-receptor protein tyrosine kinase which is activated following engagement of many different classes of cellular receptors including immune response receptors, integrins and other adhesion receptors, receptor protein tyrosine kinases, G protein-coupled receptors as well as cytokine receptors. Participates in signaling pathways that control a diverse spectrum of biological activities including gene transcription, immune response, cell adhesion, cell cycle progression, apoptosis, migration, and transformation. Due to functional redundancy between members of the SRC kinase family, identification of the specific role of each SRC kinase is very difficult. SRC appears to be one of the primary kinases activated following engagement of receptors and plays a role in the activation of other protein tyrosine kinase (PTK) families. Receptor clustering or dimerization leads to recruitment of SRC to the receptor complexes where it phosphorylates the tyrosine residues within the receptor cytoplasmic domains. Plays an important role in the regulation of cytoskeletal organization through phosphorylation of specific substrates such as AFAP1. Phosphorylation of AFAP1 allows the SRC SH2 domain to bind AFAP1 and to localize to actin filaments. Cytoskeletal reorganization is also controlled through the phosphorylation of cortactin (CTTN). When cells adhere via focal adhesions to the extracellular matrix, signals are transmitted by integrins into the cell resulting in tyrosine phosphorylation of a number of focal adhesion proteins, including PTK2/FAK1 and paxillin (PXN). In addition to phosphorylating focal adhesion proteins, SRC is also active at the sites of cell-cell contact adherens junctions and phosphorylates substrates such as beta-catenin (CTNNB1), delta-catenin (CTNND1), and plakoglobin (JUP). Another type of cell-cell junction, the gap junction, is also a target for SRC, which phosphorylates connexin-43 (GJA1). SRC is implicated in regulation of pre-mRNA-processing and phosphorylates RNA-binding proteins such as KHDRBS1. Phosphorylates PKP3 at 'Tyr-195' in response to reactive oxygen species, which may cause the release of PKP3 from desmosome cell junctions into the cytoplasm. Also plays a role in PDGF-mediated tyrosine phosphorylation of both STAT1 and STAT3, leading to increased DNA binding activity of these transcription factors. Involved in the RAS pathway through phosphorylation of RASA1 and RASGRF1. Plays a role in EGF-mediated calcium-activated chloride channel activation. Required for epidermal growth factor receptor (EGFR) internalization through phosphorylation of clathrin heavy chain (CLTC and CLTCL1) at 'Tyr-1477'. Involved in beta-arrestin (ARRB1 and ARRB2) desensitization through phosphorylation and activation of GRK2, leading to beta-arrestin phosphorylation and internalization. Has a critical role in the stimulation of the CDK20/MAPK3 mitogen-activated protein kinase cascade by epidermal growth factor. Might be involved not only in mediating the transduction of mitogenic signals at the level of the plasma membrane but also in controlling progression through the cell cycle via interaction with regulatory proteins in the nucleus. Plays an important role in osteoclastic bone resorption in conjunction with PTK2B/PYK2. Both the formation of a SRC-PTK2B/PYK2 complex and SRC kinase activity are necessary for this function. Recruited to activated integrins by PTK2B/PYK2, thereby phosphorylating CBL, which in turn induces the activation and recruitment of phosphatidylinositol 3-kinase to the cell membrane in a signaling pathway that is critical for osteoclast function. Promotes energy production in osteoclasts by activating mitochondrial cytochrome C oxidase. Phosphorylates DDR2 on tyrosine residues, thereby promoting its subsequent autophosphorylation. Phosphorylates RUNX3 and COX2 on tyrosine residues, TNK2 on 'Tyr-284' and CBL on 'Tyr-731'. Enhances RIGI-elicited antiviral signaling. Phosphorylates PDPK1 at 'Tyr-9', 'Tyr-373' and 'Tyr-376'. Phosphorylates BCAR1 at 'Tyr-128'. Phosphorylates CBLC at multiple tyrosine residues, phosphorylation at 'Tyr-341' activates CBLC E3 activity. Phosphorylates synaptic vesicle protein synaptophysin (SYP). Involved in anchorage-independent cell growth. Required for podosome formation. Mediates IL6 signaling by activating YAP1-NOTCH pathway to induce inflammation-induced epithelial regeneration. Phosphorylates OTUB1, promoting deubiquitination of RPTOR. Phosphorylates caspase CASP8 at 'Tyr-380' which negatively regulates CASP8 processing and activation, down-regulating CASP8 proapoptotic function. Non-receptor protein tyrosine kinase which phosphorylates synaptophysin with high affinity. Functionally, non-receptor protein tyrosine kinase which shows higher basal kinase activity than isoform 1, possibly due to weakened intramolecular interactions which enhance autophosphorylation of Tyr-419 and subsequent activation. The SH3 domain shows reduced affinity with the linker sequence between the SH2 and kinase domains which may account for the increased basal activity. Displays altered substrate specificity compared to isoform 1, showing weak affinity for synaptophysin and for peptide substrates containing class I or class II SH3 domain-binding motifs. Plays a role in L1CAM-mediated neurite elongation, possibly by acting downstream of L1CAM to drive cytoskeletal rearrangements involved in neurite outgrowth. Its function is as follows. Non-receptor protein tyrosine kinase which shows higher basal kinase activity than isoform 1, possibly due to weakened intramolecular interactions which enhance autophosphorylation of Tyr-419 and subsequent activation. The SH3 domain shows reduced affinity with the linker sequence between the SH2 and kinase domains which may account for the increased basal activity. Displays altered substrate specificity compared to isoform 1, showing weak affinity for synaptophysin and for peptide substrates containing class I or class II SH3 domain-binding motifs. Plays a role in neurite elongation. The protein is Proto-oncogene tyrosine-protein kinase Src of Homo sapiens (Human).